An 832-amino-acid polypeptide reads, in one-letter code: Protein P (832 aa).

The interval 1-177 is terminal protein domain (TP); the sequence is MPLSYQHFRR…FCGSPYSWEQ (177 aa). The segment at 178 to 335 is spacer; the sequence is DLQHGAESIH…YCLSLIVNLL (158 aa). Disordered regions lie at residues 186–218 and 239–266; these read IHQQSSGILSRPPVGSSLQSKHRKSRLGLQSQQ and TARRPFGVEPSGSGHTTHRASKSASCLY. A polymerase/reverse transcriptase domain (RT) region spans residues 336–679; that stretch reads EDWGPCDEYG…YLNLYPVARQ (344 aa). Residues 346-589 form the Reverse transcriptase domain; it reads EHHIRIPRTP…YSLHFMGYVI (244 aa). 3 residues coordinate Mg(2+): D418, D540, and D541.

It belongs to the hepadnaviridae P protein family.

The enzyme catalyses DNA(n) + a 2'-deoxyribonucleoside 5'-triphosphate = DNA(n+1) + diphosphate. The catalysed reaction is Endonucleolytic cleavage to 5'-phosphomonoester.. With respect to regulation, activated by host HSP70 and HSP40 in vitro to be able to bind the epsilon loop of the pgRNA. Because deletion of the RNase H region renders the protein partly chaperone-independent, the chaperones may be needed indirectly to relieve occlusion of the RNA-binding site by this domain. Inhibited by several reverse-transcriptase inhibitors: Lamivudine, Adefovir and Entecavir. Functionally, multifunctional enzyme that converts the viral RNA genome into dsDNA in viral cytoplasmic capsids. This enzyme displays a DNA polymerase activity that can copy either DNA or RNA templates, and a ribonuclease H (RNase H) activity that cleaves the RNA strand of RNA-DNA heteroduplexes in a partially processive 3'- to 5'-endonucleasic mode. Neo-synthesized pregenomic RNA (pgRNA) are encapsidated together with the P protein, and reverse-transcribed inside the nucleocapsid. Initiation of reverse-transcription occurs first by binding the epsilon loop on the pgRNA genome, and is initiated by protein priming, thereby the 5'-end of (-)DNA is covalently linked to P protein. Partial (+)DNA is synthesized from the (-)DNA template and generates the relaxed circular DNA (RC-DNA) genome. After budding and infection, the RC-DNA migrates in the nucleus, and is converted into a plasmid-like covalently closed circular DNA (cccDNA). The activity of P protein does not seem to be necessary for cccDNA generation, and is presumably released from (+)DNA by host nuclear DNA repair machinery. The chain is Protein P from Homo sapiens (Human).